Reading from the N-terminus, the 91-residue chain is UPF0250 protein PSEEN4821 (91 aa).

This sequence belongs to the UPF0250 family.

This chain is UPF0250 protein PSEEN4821, found in Pseudomonas entomophila (strain L48).